Consider the following 526-residue polypeptide: tRNA modification GTPase MSS1, mitochondrial (526 aa).

The N-terminal 19 residues, 1–19, are a transit peptide targeting the mitochondrion; it reads MNSASFLQSRLISRSFLVR. Residues 274 to 444 enclose the TrmE-type G domain; that stretch reads GIKLVLLGAP…LISTLTSNFE (171 aa). GTP contacts are provided by residues 281-288, 328-332, and 394-397; these read GAPNVGKS, DTAGI, and NKSD.

This sequence belongs to the TRAFAC class TrmE-Era-EngA-EngB-Septin-like GTPase superfamily. TrmE GTPase family. In terms of assembly, forms a heterodimer with MTO1.

It is found in the mitochondrion. Functionally, GTPase involved in the 5-carboxymethylaminomethyl modification (mnm(5)s(2)U34) of the wobble uridine base in mitochondrial tRNAs. Involved in the expression of cytochrome c oxidase subunit 1 (COX1). Works in association with the small subunit of mitoribosomes. The sequence is that of tRNA modification GTPase MSS1, mitochondrial (MSS1) from Saccharomyces cerevisiae (strain ATCC 204508 / S288c) (Baker's yeast).